The following is an 86-amino-acid chain: Small ribosomal subunit protein bS20 (86 aa).

A disordered region spans residues 1-27 (MANNKSAKKRAIQAEKRRQHNASRRSM).

It belongs to the bacterial ribosomal protein bS20 family.

Its function is as follows. Binds directly to 16S ribosomal RNA. The sequence is that of Small ribosomal subunit protein bS20 from Vibrio vulnificus (strain CMCP6).